A 454-amino-acid chain; its full sequence is uncharacterized protein (454 aa).

An N-terminal signal peptide occupies residues 1 to 21 (MKYKTVKSIPLFLLGSIVFTA). Cys22 carries N-palmitoyl cysteine lipidation. Cys22 carries S-diacylglycerol cysteine lipidation. Low complexity predominate over residues 55–64 (ASSSSSTTTS). A disordered region spans residues 55 to 87 (ASSSSSTTTSNDDNNQKGYFLETNRSTGTYDPN). The span at 65-87 (NDDNNQKGYFLETNRSTGTYDPN) shows a compositional bias: polar residues.

Its subcellular location is the cell membrane. This is an uncharacterized protein from Mycoplasma pneumoniae (strain ATCC 29342 / M129 / Subtype 1) (Mycoplasmoides pneumoniae).